The primary structure comprises 201 residues: Cytochrome c oxidase assembly protein CtaG (201 aa).

Topologically, residues 1–12 (MTDQGENEKKQR) are cytoplasmic. The chain crosses the membrane as a helical; Signal-anchor for type II membrane protein span at residues 13-35 (RSNATIAVACLSFFVCMIGAAYA). Topologically, residues 36-201 (SVPLYRIFCQ…KAVGSTRNGG (166 aa)) are periplasmic.

It belongs to the COX11/CtaG family.

Its subcellular location is the cell inner membrane. Its function is as follows. Exerts its effect at some terminal stage of cytochrome c oxidase synthesis, probably by being involved in the insertion of the copper B into subunit I. The sequence is that of Cytochrome c oxidase assembly protein CtaG from Brucella suis biovar 1 (strain 1330).